We begin with the raw amino-acid sequence, 265 residues long: Putative 2-aminoethylphosphonate transport system permease protein PhnV (265 aa).

6 helical membrane-spanning segments follow: residues 13 to 33, 69 to 89, 104 to 124, 131 to 151, 185 to 205, and 233 to 253; these read GVVA…VILM, LTIG…AALA, VFYL…LVAF, MNGT…AFTF, LPLL…LSMG, and NIAD…LLMM. Residues 65–253 enclose the ABC transmembrane type-1 domain; it reads LLASLTIGFC…LVAITLLLMM (189 aa).

The protein belongs to the binding-protein-dependent transport system permease family.

The protein localises to the cell inner membrane. Probably part of the PhnSTUV complex (TC 3.A.1.11.5) involved in 2-aminoethylphosphonate import. Probably responsible for the translocation of the substrate across the membrane. The chain is Putative 2-aminoethylphosphonate transport system permease protein PhnV (phnV) from Salmonella choleraesuis (strain SC-B67).